The primary structure comprises 344 residues: Selenide, water dikinase (344 aa).

Cysteine 16 is an active-site residue. ATP-binding positions include lysine 19 and 47–49 (SRD). Aspartate 50 lines the Mg(2+) pocket. ATP-binding positions include aspartate 67, aspartate 90, and 138-140 (GHS). Aspartate 90 lines the Mg(2+) pocket. Aspartate 226 lines the Mg(2+) pocket.

The protein belongs to the selenophosphate synthase 1 family. Class I subfamily. In terms of assembly, homodimer. Mg(2+) serves as cofactor.

It carries out the reaction hydrogenselenide + ATP + H2O = selenophosphate + AMP + phosphate + 2 H(+). Synthesizes selenophosphate from selenide and ATP. This is Selenide, water dikinase from Bordetella bronchiseptica (strain ATCC BAA-588 / NCTC 13252 / RB50) (Alcaligenes bronchisepticus).